The sequence spans 330 residues: Ribosomal RNA small subunit methyltransferase C (330 aa).

The protein belongs to the methyltransferase superfamily. RsmC family. As to quaternary structure, monomer.

Its subcellular location is the cytoplasm. The enzyme catalyses guanosine(1207) in 16S rRNA + S-adenosyl-L-methionine = N(2)-methylguanosine(1207) in 16S rRNA + S-adenosyl-L-homocysteine + H(+). Its function is as follows. Specifically methylates the guanine in position 1207 of 16S rRNA in the 30S particle. This is Ribosomal RNA small subunit methyltransferase C from Haemophilus influenzae (strain PittGG).